Consider the following 343-residue polypeptide: 4-hydroxy-2-oxovalerate aldolase (343 aa).

Residues Ile5–Leu256 form the Pyruvate carboxyltransferase domain. Residue Arg13–Asp14 participates in substrate binding. Residue Asp14 participates in Mn(2+) binding. The active-site Proton acceptor is His17. 2 residues coordinate substrate: Ser168 and His195. Mn(2+) contacts are provided by His195 and His197.

The protein belongs to the 4-hydroxy-2-oxovalerate aldolase family. In terms of assembly, interacts with MhpF.

The enzyme catalyses (S)-4-hydroxy-2-oxopentanoate = acetaldehyde + pyruvate. Its pathway is aromatic compound metabolism; 3-phenylpropanoate degradation. Functionally, catalyzes the retro-aldol cleavage of 4-hydroxy-2-oxopentanoate to pyruvate and acetaldehyde. Is involved in the meta-cleavage pathway for the degradation of aromatic compounds. This is 4-hydroxy-2-oxovalerate aldolase from Pectobacterium atrosepticum (strain SCRI 1043 / ATCC BAA-672) (Erwinia carotovora subsp. atroseptica).